The chain runs to 362 residues: Abnormal cell migration protein 13 (362 aa).

The first 20 residues, 1 to 20, serve as a signal peptide directing secretion; it reads MTKLLIALILFSICWKPYSA. At 21–237 the chain is on the extracellular side; it reads EPIASFFDGL…ELDPLTTVSG (217 aa). 2 cysteine pairs are disulfide-bonded: cysteine 36–cysteine 68 and cysteine 98–cysteine 136. The CUB domain maps to 36 to 175; sequence CKARLDRRLT…KGFKLHWGSF (140 aa). Asparagine 63 is a glycosylation site (N-linked (GlcNAc...) asparagine). Asparagine 145 and asparagine 161 each carry an N-linked (GlcNAc...) asparagine glycan. One can recognise an LDL-receptor class A domain in the interval 182–225; it reads NCVTGEFSCGNGECIPIESACDRFADCSNGEDLIHSRQMAANCQ. Disulfide bonds link cysteine 183-cysteine 195, cysteine 190-cysteine 208, and cysteine 202-cysteine 224. The chain crosses the membrane as a helical span at residues 238–258; that stretch reads VFVLLFSATIILSLCGFIMFV. At 259–362 the chain is on the cytoplasmic side; the sequence is CCLCKCLKST…VRNDVHRNLL (104 aa). Residues 275 to 311 are disordered; it reads SSHTTTTTATDYKPDPPQFYPPSPPKMPPPSAASSYT. Over residues 289-305 the composition is skewed to pro residues; the sequence is DPPQFYPPSPPKMPPPS.

Interacts with abl-1 (via SH2 and SH3 domains); the interaction is direct. Interacts with sem-5; the interaction is direct. In terms of tissue distribution, expressed in pharyngeal-intestinal valve cells and ventral cord neurons.

The protein localises to the cell membrane. It localises to the perikaryon. Its subcellular location is the cell projection. It is found in the axon. The protein resides in the dendrite. Its function is as follows. Probable receptor that acts as an upstream signaling protein to promote the guidance, migration and positioning of the right Q neuroblast (QR) and its descendants along the anteroposterior body axis, and also the anterior migration of BDU interneurons during larval development. Associates with and recruits the downstream components tyrosine kinase abl-1 and the tyrosine kinase adapter protein sem-5 to the leading edge of migrating Q neuroblasts and their descendants to activate signaling through the two parallel wve-1 and wsp-1 pathways, respectively, and direct migration along the anteroposterior body axis. Involved in cytoskeleton dynamics regulating the organization of the actin cytoskeleton at the leading edge of migrating cells to ensure correct Q cell polarity and promote migration. Role in cytoskeleton organization may be by activation of the wve-1 and wsp-1 pathways which recruit the Arp2/3 complex to the leading edge of migrating cells. Plays a role in regulating the asymmetric distribution of the actin cytoskeleton-binding protein cor-1 in Q neuroblasts which is required for the anterior migration of QR neuroblasts. The protein is Abnormal cell migration protein 13 of Caenorhabditis elegans.